Reading from the N-terminus, the 413-residue chain is MNLLVFFCFFLLSCIVHLSRCSDNNSYSFEIVNRSTWLNIAERIFKGNAPFNFTIIPYNYVNNSTEENNNKDSVLLISKNLKNSSNPVDENNHIIDSTKKNTSNNNNNNSNIVGIYESQVHEEKIKEDNTRQDNINKKENEIINNNHQIPVSNIFSENIDNNKNYIESNYKSTYNNNPELIHSTDFIGSNNNHTFNFLSRYNNSVLNNMQGNTKVPGNVPELKARIFSEEENTEVESAENNHTNSLNPNESCDQIIKLGDIINSVNEKIISINSTVNNVLCINLDSVNGNGFVWTLLGVHKKKPLIDPSNFPTKRVTQSYVSPDISVTNPVPIPKNSNTNKDDSINNKQDGSQNNTTTNHFPKPREQLVGGSSMLISKIKPHKPGKYFIVYSYYRPFDPTRDTNTRIVELNVQ.

The signal sequence occupies residues 1-21 (MNLLVFFCFFLLSCIVHLSRC). A BC loop; binds and inhibits the active site cavity of cysteine proteases motif is present at residues 284–294 (LDSVNGNGFVW). 2 stretches are compositionally biased toward polar residues: residues 325-339 (ISVTNPVPIPKNSNT) and 346-360 (NNKQDGSQNNTTTNH). The disordered stretch occupies residues 325–367 (ISVTNPVPIPKNSNTNKDDSINNKQDGSQNNTTTNHFPKPREQ).

It belongs to the protease inhibitor I71 family. As to quaternary structure, oligomer; probably composed of 10 monomers. In terms of processing, proteolytically cleaved.

The protein localises to the secreted. It localises to the cytoplasmic vesicle. It is found in the secretory vesicle. Its subcellular location is the microneme. The protein resides in the parasitophorous vacuole lumen. The protein localises to the host cytoplasm. Its function is as follows. Cysteine protease inhibitor. Inhibits cysteine protease falcipains FP2 and FP3. Required for the invasion of host erythrocytes by merozoites. In the mosquito vector, essential for the gliding motility of hemocoel sporozoites and, therefore, for salivary gland invasion and the subsequent transmission from the mosquito to the mammalian host. Required for the invasion of host hepatocytes. During the liver stage, may prevent host hepatocyte cell death likely by inhibiting host cysteine proteases. This is Falstatin from Plasmodium falciparum (isolate 3D7).